The following is a 424-amino-acid chain: Serine--tRNA ligase (424 aa).

Residue 229–231 (TAE) coordinates L-serine. ATP contacts are provided by residues 260–262 (RTE) and Val276. L-serine is bound at residue Glu283. 347–350 (EVTS) serves as a coordination point for ATP. Position 382 (Thr382) interacts with L-serine.

It belongs to the class-II aminoacyl-tRNA synthetase family. Type-1 seryl-tRNA synthetase subfamily. In terms of assembly, homodimer. The tRNA molecule binds across the dimer.

The protein localises to the cytoplasm. The enzyme catalyses tRNA(Ser) + L-serine + ATP = L-seryl-tRNA(Ser) + AMP + diphosphate + H(+). It catalyses the reaction tRNA(Sec) + L-serine + ATP = L-seryl-tRNA(Sec) + AMP + diphosphate + H(+). The protein operates within aminoacyl-tRNA biosynthesis; selenocysteinyl-tRNA(Sec) biosynthesis; L-seryl-tRNA(Sec) from L-serine and tRNA(Sec): step 1/1. In terms of biological role, catalyzes the attachment of serine to tRNA(Ser). Is also able to aminoacylate tRNA(Sec) with serine, to form the misacylated tRNA L-seryl-tRNA(Sec), which will be further converted into selenocysteinyl-tRNA(Sec). The polypeptide is Serine--tRNA ligase (Rubrobacter xylanophilus (strain DSM 9941 / JCM 11954 / NBRC 16129 / PRD-1)).